The chain runs to 57 residues: uncharacterized protein (57 aa).

The disordered stretch occupies residues 1-57 (MPHYVVVKSPMRRRRSPRRRSPRVCYSPRRVACSPRRRSPRRRSPRRRSPRRSIVVY). The span at 10–22 (PMRRRRSPRRRSP) shows a compositional bias: basic residues. Low complexity predominate over residues 23–34 (RVCYSPRRVACS). Positions 35–51 (PRRRSPRRRSPRRRSPR) are enriched in basic residues.

This is an uncharacterized protein from Acheta domesticus (House cricket).